We begin with the raw amino-acid sequence, 510 residues long: NAD(P)H-quinone oxidoreductase subunit 2 A, chloroplastic (510 aa).

13 helical membrane-spanning segments follow: residues 24–44 (LLLF…GLIL), 57–77 (IPWL…ALLF), 99–119 (IFQF…VEYI), 124–144 (MAIT…MFLC), 149–169 (LITI…LSGY), 183–203 (YLLM…WLYG), 227–247 (PGIS…LSPA), 295–315 (WHLL…LIAI), 323–343 (MLAY…IVGD), 354–374 (YMLF…LFGL), 395–415 (ALSL…AGFF), 418–438 (LYLF…IGLL), and 484–504 (MIVC…IIAI).

Belongs to the complex I subunit 2 family. NDH is composed of at least 16 different subunits, 5 of which are encoded in the nucleus.

Its subcellular location is the plastid. The protein localises to the chloroplast thylakoid membrane. The enzyme catalyses a plastoquinone + NADH + (n+1) H(+)(in) = a plastoquinol + NAD(+) + n H(+)(out). It carries out the reaction a plastoquinone + NADPH + (n+1) H(+)(in) = a plastoquinol + NADP(+) + n H(+)(out). NDH shuttles electrons from NAD(P)H:plastoquinone, via FMN and iron-sulfur (Fe-S) centers, to quinones in the photosynthetic chain and possibly in a chloroplast respiratory chain. The immediate electron acceptor for the enzyme in this species is believed to be plastoquinone. Couples the redox reaction to proton translocation, and thus conserves the redox energy in a proton gradient. The sequence is that of NAD(P)H-quinone oxidoreductase subunit 2 A, chloroplastic from Panax ginseng (Korean ginseng).